The following is a 340-amino-acid chain: MAQFPLLGHGFPPEPVNHPLGGPRGLDVAGPTICPAPEEEPSRPEQVQASLDAPEHFMDEPKSTESATSPSKLPLASSHEHQDGGKPCEALQAELQGAAERVDALLVFGEGLAERSEPRAWTSLEQVLRALGTHRDTIFQRLWQLQAQLISYSLVLEKANLLDQDLEVEGDSDGPAAGGVWGPWAPSIFPTPAELEWDPAGDVGGLGPSGQKISRIPGAPCELCGYRGSQSSGQGFEDLLSLGLGHRKHLAAHHRRRLQKPQDKKRQGPPSLPDAMLEVDRGVPAPASRRPLTFLLLLLFLLLVGATLLLPLSGVPCCSHTRLARTPYLVLSYVNGLPPI.

Disordered stretches follow at residues 1–86 and 254–277; these read MAQF…DGGK and HRRR…DAML. Topologically, residues 1-291 are cytoplasmic; the sequence is MAQFPLLGHG…GVPAPASRRP (291 aa). Residues 53-63 are compositionally biased toward basic and acidic residues; the sequence is APEHFMDEPKS. The 58-residue stretch at 283–340 folds into the KASH domain; it reads VPAPASRRPLTFLLLLLFLLLVGATLLLPLSGVPCCSHTRLARTPYLVLSYVNGLPPI. Residues 292–312 traverse the membrane as a helical; Anchor for type IV membrane protein segment; it reads LTFLLLLLFLLLVGATLLLPL. Topologically, residues 313–340 are perinuclear space; the sequence is SGVPCCSHTRLARTPYLVLSYVNGLPPI.

It belongs to the nesprin family. As to quaternary structure, core component of LINC complexes which are composed of inner nuclear membrane SUN domain-containing proteins coupled to outer nuclear membrane KASH domain-containing nesprins. SUN and KASH domain-containing proteins seem to bind each other promiscuously; however, differentially expression of LINC complex constituents can give rise to specific assemblies. Probably part of a SUN1-containing LINC complex. Interacts with kinesins KIF5B and KLC1.

The protein resides in the nucleus outer membrane. Functionally, as a component of the LINC (LInker of Nucleoskeleton and Cytoskeleton) complex, involved in the connection between the nuclear lamina and the cytoskeleton. The nucleocytoplasmic interactions established by the LINC complex play an important role in the transmission of mechanical forces across the nuclear envelope and in nuclear movement and positioning. Behaves as a kinesin cargo, providing a functional binding site for kinesin-1 at the nuclear envelope. Hence may contribute to the establishment of secretory epithelial morphology, by promoting kinesin-dependent apical migration of the centrosome and Golgi apparatus and basal localization of the nucleus. The sequence is that of Nesprin-4 (Syne4) from Rattus norvegicus (Rat).